The sequence spans 262 residues: Phosphonates import ATP-binding protein PhnC (262 aa).

The 249-residue stretch at 5-253 (IRVEKLAKTF…RFDHLYRSIN (249 aa)) folds into the ABC transporter domain. 37-44 (GPSGSGKS) lines the ATP pocket.

This sequence belongs to the ABC transporter superfamily. Phosphonates importer (TC 3.A.1.9.1) family. The complex is composed of two ATP-binding proteins (PhnC), two transmembrane proteins (PhnE) and a solute-binding protein (PhnD).

It is found in the cell inner membrane. It catalyses the reaction phosphonate(out) + ATP + H2O = phosphonate(in) + ADP + phosphate + H(+). In terms of biological role, part of the ABC transporter complex PhnCDE involved in phosphonates import. Responsible for energy coupling to the transport system. The sequence is that of Phosphonates import ATP-binding protein PhnC from Shigella sonnei (strain Ss046).